A 201-amino-acid chain; its full sequence is UPF0301 protein RHECIAT_CH0001061 (201 aa).

The protein belongs to the UPF0301 (AlgH) family.

The chain is UPF0301 protein RHECIAT_CH0001061 from Rhizobium etli (strain CIAT 652).